The sequence spans 219 residues: Response regulator ArlR (219 aa).

In terms of domain architecture, Response regulatory spans 3–116 (NILIVEDEQN…ELLARIRAVL (114 aa)). At Asp52 the chain carries 4-aspartylphosphate. The ompR/PhoB-type DNA-binding region spans 122 to 219 (KDVLDINGII…TVRGVGYVIR (98 aa)).

In terms of processing, phosphorylated by ArlS.

It is found in the cytoplasm. In terms of biological role, member of the two-component regulatory system ArlS/ArlR. The protein is Response regulator ArlR (arlR) of Staphylococcus epidermidis (strain ATCC 12228 / FDA PCI 1200).